The primary structure comprises 642 residues: Arginine--tRNA ligase (642 aa).

A 'HIGH' region motif is present at residues 133–143 (VNPTKPLHMGH).

Belongs to the class-I aminoacyl-tRNA synthetase family.

Its subcellular location is the cytoplasm. The catalysed reaction is tRNA(Arg) + L-arginine + ATP = L-arginyl-tRNA(Arg) + AMP + diphosphate. The sequence is that of Arginine--tRNA ligase from Thermococcus kodakarensis (strain ATCC BAA-918 / JCM 12380 / KOD1) (Pyrococcus kodakaraensis (strain KOD1)).